The sequence spans 307 residues: Fructokinase (307 aa).

This sequence belongs to the carbohydrate kinase PfkB family.

The catalysed reaction is D-fructose + ATP = D-fructose 6-phosphate + ADP + H(+). The sequence is that of Fructokinase (scrK) from Vibrio alginolyticus.